Reading from the N-terminus, the 365-residue chain is Chorismate synthase (365 aa).

An NADP(+)-binding site is contributed by R47. FMN-binding positions include 124–126 (RAS), G287, 302–306 (KPTAT), and R328.

The protein belongs to the chorismate synthase family. As to quaternary structure, homotetramer. Requires FMNH2 as cofactor.

The catalysed reaction is 5-O-(1-carboxyvinyl)-3-phosphoshikimate = chorismate + phosphate. It functions in the pathway metabolic intermediate biosynthesis; chorismate biosynthesis; chorismate from D-erythrose 4-phosphate and phosphoenolpyruvate: step 7/7. In terms of biological role, catalyzes the anti-1,4-elimination of the C-3 phosphate and the C-6 proR hydrogen from 5-enolpyruvylshikimate-3-phosphate (EPSP) to yield chorismate, which is the branch point compound that serves as the starting substrate for the three terminal pathways of aromatic amino acid biosynthesis. This reaction introduces a second double bond into the aromatic ring system. The protein is Chorismate synthase of Prochlorococcus marinus (strain MIT 9215).